Consider the following 1792-residue polypeptide: BTB/POZ domain-containing protein 8 (1792 aa).

BTB domains lie at 58–127 (TDVT…NIKN) and 206–273 (PDID…DIPD). Disordered stretches follow at residues 528 to 554 (DKGD…SDSG), 581 to 658 (SDGL…PRQV), 670 to 692 (TGQK…SGAR), 707 to 768 (KPLK…CDSP), 788 to 815 (SRPV…NNSV), 831 to 989 (AILK…KPHK), 1151 to 1283 (ERTN…SNDR), and 1519 to 1607 (SIDS…KSLD). Composition is skewed to polar residues over residues 541–552 (FSSSQQRKQVSD) and 588–601 (GHSS…INKT). Composition is skewed to basic and acidic residues over residues 602–625 (LKQD…ELKT) and 640–650 (SKTENGDKARL). The span at 724–740 (GPSSRSTDSSMEFSIST) shows a compositional bias: polar residues. Residues 744–758 (DEPKENGSTEEEKPS) are compositionally biased toward basic and acidic residues. Residues 838–865 (TSNGCTAAQQRTKSTPSNLTKTQGSQGE) are compositionally biased toward polar residues. A compositionally biased stretch (low complexity) spans 866 to 877 (SPNSVKSSVSSR). 2 stretches are compositionally biased toward basic and acidic residues: residues 878–891 (QSDE…HNTT) and 927–939 (KKGE…DSKQ). Residues 947 to 956 (ISKTQPSSQR) are compositionally biased toward polar residues. A compositionally biased stretch (basic and acidic residues) spans 969-987 (MFHDVRDNNNKDSVSEQKP). Composition is skewed to polar residues over residues 1151–1160 (ERTNGTLNSA) and 1195–1215 (SDVS…PKNM). Residues 1250–1259 (SDTGSATTSS) are compositionally biased toward low complexity. Residues 1566 to 1594 (IQQRSKFLDSDVKSQERPCHLDLHQREPN) show a composition bias toward basic and acidic residues. Polar residues predominate over residues 1597 to 1607 (IPKNSSTKSLD).

Interacts (via N-terminus) with adapter protein complex AP-2 subunits alpha (AP2A1) and beta (AP2B1). As to expression, highly expressed in fetal brain. Weakly expressed in adult brain and prostate.

The protein localises to the cell projection. It is found in the axon. It localises to the presynapse. Its subcellular location is the cytoplasmic vesicle. The protein resides in the clathrin-coated vesicle. The protein localises to the nucleus. In terms of biological role, involved in clathrin-mediated endocytosis at the synapse. Plays a role in neuronal development and in synaptic vesicle recycling in mature neurons, a process required for normal synaptic transmission. This chain is BTB/POZ domain-containing protein 8, found in Homo sapiens (Human).